The sequence spans 466 residues: Ribosome biogenesis protein YTM1 (466 aa).

Residues 8 to 95 (IKINFFTNEE…EASLNLEYTR (88 aa)) form a ubiquitin-like (UBL) domain region. The interval 105–466 (SFNNDDWISS…QINKGSDITK (362 aa)) is sufficient for interaction with ERB1 and association with 66S pre-ribosomes. 7 WD repeats span residues 120–159 (PLSA…EKQY), 161–199 (GHSG…NIED), 214–253 (GHKA…MTTI), 291–331 (GHSQ…CVDT), 333–372 (TTGY…TTTE), 381–421 (GHTN…SLYT), and 431–466 (KGQD…DITK).

This sequence belongs to the WD repeat WDR12/YTM1 family. Component of the NOP7 complex, composed of ERB1, NOP7 and YTM1. The complex is held together by ERB1, which interacts with NOP7 via its N-terminal domain and with YTM1 via a high-affinity interaction between the seven-bladed beta-propeller domains of the 2 proteins. The NOP7 complex associates with the 66S pre-ribosome. Interacts (via UBL domain) with MDN1 (via VWFA/MIDAS domain).

It is found in the nucleus. It localises to the nucleolus. The protein resides in the nucleoplasm. In terms of biological role, component of the NOP7 complex, which is required for maturation of the 25S and 5.8S ribosomal RNAs and formation of the 60S ribosome. This is Ribosome biogenesis protein YTM1 from Debaryomyces hansenii (strain ATCC 36239 / CBS 767 / BCRC 21394 / JCM 1990 / NBRC 0083 / IGC 2968) (Yeast).